Consider the following 225-residue polypeptide: Putative adhesin RT0816 (225 aa).

A signal peptide spans 1–22 (MKKLLLIAATSATILSSSISFA).

The protein is Putative adhesin RT0816 of Rickettsia typhi (strain ATCC VR-144 / Wilmington).